Here is a 344-residue protein sequence, read N- to C-terminus: F17a-G fimbrial adhesin (344 aa).

Positions 1 to 22 (MTNFYKVFLAVFILVCCNISQA) are cleaved as a signal peptide. The tract at residues 23–199 (AVSFIGSTEN…SLNPFTLNDT (177 aa)) is receptor-binding lectin domain. A carbohydrate-binding positions include 65–66 (AN), 110–111 (DT), and 139–142 (STQG). Cysteine 75 and cysteine 132 are oxidised to a cystine. Residues 200–344 (VTSCRLLTPS…GISTFTFSYQ (145 aa)) are fimbrillin-binding domain. The disordered stretch occupies residues 288-308 (LKFGPDSPVKGNENQWQLSTG). Positions 299–308 (NENQWQLSTG) are enriched in polar residues.

This sequence belongs to the fimbrial protein family.

The protein resides in the fimbrium. In terms of biological role, essential fimbrial adhesion factor that mediates binding to N-acetylglucosamine-containing receptors in the host intestinal microvilli, leading to colonization of the intestinal tissue, and diarrhea or septicemia. Also confers adhesiveness to laminin and basement membranes. The sequence is that of F17a-G fimbrial adhesin (f17aG) from Escherichia coli.